The chain runs to 167 residues: Lipoprotein signal peptidase (167 aa).

The next 2 membrane-spanning stretches (helical) occupy residues 56-76 (FAPPFVLLMLTGAIVLGVLVF) and 84-104 (TPIFLSAFGLIAGGGIGNMID). Catalysis depends on residues D113 and D139. The chain crosses the membrane as a helical span at residues 132-152 (WPIFNVADSAITIGACMLVLF).

This sequence belongs to the peptidase A8 family.

It is found in the cell inner membrane. It carries out the reaction Release of signal peptides from bacterial membrane prolipoproteins. Hydrolyzes -Xaa-Yaa-Zaa-|-(S,diacylglyceryl)Cys-, in which Xaa is hydrophobic (preferably Leu), and Yaa (Ala or Ser) and Zaa (Gly or Ala) have small, neutral side chains.. Its pathway is protein modification; lipoprotein biosynthesis (signal peptide cleavage). Its function is as follows. This protein specifically catalyzes the removal of signal peptides from prolipoproteins. The chain is Lipoprotein signal peptidase from Chlorobium luteolum (strain DSM 273 / BCRC 81028 / 2530) (Pelodictyon luteolum).